Reading from the N-terminus, the 347-residue chain is Dolichyl-diphosphooligosaccharide--protein glycosyltransferase subunit TUSC3 (347 aa).

The N-terminal stretch at 1–41 (MGARGAPSRRRQAGRRPRYLPTGSFPFLLLLLLLCIQLGGG) is a signal peptide. Residues 42–196 (QKKKENLLAE…DVHIRVFRPP (155 aa)) are Lumenal-facing. Residues 59–187 (WSSRRSVFRM…LAKWIADRTD (129 aa)) enclose the Thioredoxin domain. Residue asparagine 83 is glycosylated (N-linked (GlcNAc...) asparagine). A disulfide bridge connects residues cysteine 99 and cysteine 102. Residues 197–217 (NYSGTIALALLVSLVGGLLYL) form a helical membrane-spanning segment. Residues 218–221 (RRNN) lie on the Cytoplasmic side of the membrane. A helical transmembrane segment spans residues 222 to 242 (LEFIYNKTGWAMVSLCIVFAM). Residues 243 to 276 (TSGQMWNHIRGPPYAHKNPHNGQVSYIHGSSQVQ) lie on the Lumenal side of the membrane. A helical membrane pass occupies residues 277–297 (FVAESHIILVLNAAITMGMDL). The Cytoplasmic segment spans residues 298-312 (LNEAATSKGDVGKRR). Residues 313–333 (IICLVGLGLVVFFFSFLLSIF) traverse the membrane as a helical segment. The Lumenal portion of the chain corresponds to 334 to 347 (RSKYHGYPYSFLIK).

This sequence belongs to the OST3/OST6 family. Accessory component of the STT3B-containing form of the oligosaccharyltransferase (OST) complex. OST exists in two different complex forms which contain common core subunits RPN1, RPN2, OST48, OST4, DAD1 and TMEM258, either STT3A or STT3B as catalytic subunits, and form-specific accessory subunits. OST can form stable complexes with the Sec61 complex or with both the Sec61 and TRAP complexes. The association of TUSC3 or MAGT1 with the STT3B-containing complex seems to be mutually exclusvice.

Its subcellular location is the endoplasmic reticulum membrane. It participates in protein modification; protein glycosylation. Its function is as follows. Acts as accessory component of the N-oligosaccharyl transferase (OST) complex which catalyzes the transfer of a high mannose oligosaccharide from a lipid-linked oligosaccharide donor to an asparagine residue within an Asn-X-Ser/Thr consensus motif in nascent polypeptide chains. Involved in N-glycosylation of STT3B-dependent substrates. Specifically required for the glycosylation of a subset of acceptor sites that are near cysteine residues; in this function seems to act redundantly with MAGT1. In its oxidized form proposed to form transient mixed disulfides with a glycoprotein substrate to facilitate access of STT3B to the unmodified acceptor site. Also has oxidoreductase-independent functions in the STT3B-containing OST complex possibly involving substrate recognition. Could indirectly play a role in Mg(2+) transport. The chain is Dolichyl-diphosphooligosaccharide--protein glycosyltransferase subunit TUSC3 (TUSC3) from Bos taurus (Bovine).